A 351-amino-acid chain; its full sequence is Protein MGF 360-2L (351 aa).

The protein belongs to the asfivirus MGF 360 family.

Its function is as follows. Plays a role in virus cell tropism, and may be required for efficient virus replication in macrophages. This chain is Protein MGF 360-2L, found in African swine fever virus (isolate Tick/South Africa/Pretoriuskop Pr4/1996) (ASFV).